A 497-amino-acid chain; its full sequence is uncharacterized protein (497 aa).

2 consecutive ABC transporter domains span residues 9-247 and 256-496; these read VSVR…MGQA and ARPA…TGMA. 41 to 48 serves as a coordination point for ATP; the sequence is GGNGAGKS.

Belongs to the ABC transporter superfamily. Ribose importer (TC 3.A.1.2.1) family.

It localises to the cell membrane. In terms of biological role, probably part of the binding-protein-dependent transport system y4mIJK. This system probably transports a sugar. Probably responsible for energy coupling to the transport system. This is an uncharacterized protein from Sinorhizobium fredii (strain NBRC 101917 / NGR234).